The sequence spans 316 residues: tRNA dimethylallyltransferase (316 aa).

Residue 9 to 16 (GPTASGKS) coordinates ATP. 11–16 (TASGKS) contributes to the substrate binding site. Interaction with substrate tRNA regions lie at residues 34 to 37 (DSMQ) and 158 to 162 (QRLAR).

This sequence belongs to the IPP transferase family. Monomer. Mg(2+) serves as cofactor.

It catalyses the reaction adenosine(37) in tRNA + dimethylallyl diphosphate = N(6)-dimethylallyladenosine(37) in tRNA + diphosphate. In terms of biological role, catalyzes the transfer of a dimethylallyl group onto the adenine at position 37 in tRNAs that read codons beginning with uridine, leading to the formation of N6-(dimethylallyl)adenosine (i(6)A). This chain is tRNA dimethylallyltransferase, found in Hyphomonas neptunium (strain ATCC 15444).